Consider the following 299-residue polypeptide: Formylglycine-generating enzyme (299 aa).

The Cu cation site is built by Cys-263 and Cys-268.

It belongs to the sulfatase-modifying factor family. Cu cation serves as cofactor.

The enzyme catalyses L-cysteinyl-[sulfatase] + 2 a thiol + O2 = an organic disulfide + 3-oxo-L-alanyl-[sulfatase] + hydrogen sulfide + H2O + H(+). It functions in the pathway protein modification; sulfatase oxidation. Oxidase that catalyzes the conversion of cysteine to 3-oxoalanine on target proteins. 3-oxoalanine modification, which is also named formylglycine (fGly), occurs in the maturation of arylsulfatases and some alkaline phosphatases that use the hydrated form of 3-oxoalanine as a catalytic nucleophile. The protein is Formylglycine-generating enzyme of Mycobacterium tuberculosis (strain ATCC 25618 / H37Rv).